Here is a 270-residue protein sequence, read N- to C-terminus: Acetyl-coenzyme A carboxylase carboxyl transferase subunit beta (270 aa).

The 255-residue stretch at 16–270 folds into the CoA carboxyltransferase N-terminal domain; the sequence is LFAKCPACKH…KLLAFHGGSK (255 aa). 4 residues coordinate Zn(2+): Cys-20, Cys-23, Cys-38, and Cys-41. The C4-type zinc finger occupies 20–41; it reads CPACKHMIYQKDLGLEKICPKC.

This sequence belongs to the AccD/PCCB family. As to quaternary structure, acetyl-CoA carboxylase is a heterohexamer composed of biotin carboxyl carrier protein (AccB), biotin carboxylase (AccC) and two subunits each of ACCase subunit alpha (AccA) and ACCase subunit beta (AccD). The cofactor is Zn(2+).

It localises to the cytoplasm. It catalyses the reaction N(6)-carboxybiotinyl-L-lysyl-[protein] + acetyl-CoA = N(6)-biotinyl-L-lysyl-[protein] + malonyl-CoA. It participates in lipid metabolism; malonyl-CoA biosynthesis; malonyl-CoA from acetyl-CoA: step 1/1. In terms of biological role, component of the acetyl coenzyme A carboxylase (ACC) complex. Biotin carboxylase (BC) catalyzes the carboxylation of biotin on its carrier protein (BCCP) and then the CO(2) group is transferred by the transcarboxylase to acetyl-CoA to form malonyl-CoA. This chain is Acetyl-coenzyme A carboxylase carboxyl transferase subunit beta, found in Streptococcus mutans serotype c (strain NN2025).